A 238-amino-acid polypeptide reads, in one-letter code: Riboflavin synthase (238 aa).

Lumazine-binding repeat units follow at residues 1–103 (MFTG…FGGH) and 104–205 (YVQG…EKQI). 2,4-dihydroxypteridine-binding positions include 4-6 (GIV), 54-56 (CLT), and 68-73 (GISPET). Phosphoserine is present on Ser-95. Residues 107 to 109 (GHV), Lys-143, 152 to 154 (SLT), and 170 to 175 (SMIKHT) each bind 2,4-dihydroxypteridine.

In terms of assembly, homotrimer.

It catalyses the reaction 2 6,7-dimethyl-8-(1-D-ribityl)lumazine + H(+) = 5-amino-6-(D-ribitylamino)uracil + riboflavin. It functions in the pathway cofactor biosynthesis; riboflavin biosynthesis; riboflavin from 2-hydroxy-3-oxobutyl phosphate and 5-amino-6-(D-ribitylamino)uracil: step 2/2. Functionally, catalyzes the dismutation of two molecules of 6,7-dimethyl-8-ribityllumazine, resulting in the formation of riboflavin and 5-amino-6-(D-ribitylamino)uracil. This chain is Riboflavin synthase, found in Saccharomyces cerevisiae (strain ATCC 204508 / S288c) (Baker's yeast).